Here is a 452-residue protein sequence, read N- to C-terminus: FAD-linked oxidoreductase DDB_G0289697 (452 aa).

Positions 44–212 constitute an FAD-binding PCMH-type domain; that stretch reads VVNTPLLIVY…TDFTFKLHPV (169 aa). At His81 the chain carries Pros-8alpha-FAD histidine.

This sequence belongs to the oxygen-dependent FAD-linked oxidoreductase family. FAD serves as cofactor.

In Dictyostelium discoideum (Social amoeba), this protein is FAD-linked oxidoreductase DDB_G0289697.